The sequence spans 66 residues: Large ribosomal subunit protein uL29 (66 aa).

It belongs to the universal ribosomal protein uL29 family.

In Borreliella afzelii (strain PKo) (Borrelia afzelii), this protein is Large ribosomal subunit protein uL29.